Here is a 201-residue protein sequence, read N- to C-terminus: Small ribosomal subunit protein uS4c (201 aa).

Positions 17–36 (ALPGLTRKTPKSGSNLKKKF) are disordered. Residues 89 to 157 (MRLDNILFRL…VQNYIASSDP (69 aa)) form the S4 RNA-binding domain.

It belongs to the universal ribosomal protein uS4 family. In terms of assembly, part of the 30S ribosomal subunit. Contacts protein S5. The interaction surface between S4 and S5 is involved in control of translational fidelity.

It localises to the plastid. It is found in the chloroplast. Its function is as follows. One of the primary rRNA binding proteins, it binds directly to 16S rRNA where it nucleates assembly of the body of the 30S subunit. In terms of biological role, with S5 and S12 plays an important role in translational accuracy. This Agrostis stolonifera (Creeping bentgrass) protein is Small ribosomal subunit protein uS4c (rps4).